The sequence spans 113 residues: Ig heavy chain V-III region A4 (113 aa).

Residues 1–113 form the Ig-like domain; that stretch reads EVKLEESGGG…YWGQGTLVTV (113 aa). A disulfide bridge connects residues Cys-22 and Cys-98.

This Mus musculus (Mouse) protein is Ig heavy chain V-III region A4.